The primary structure comprises 192 residues: Small ribosomal subunit protein uS4B (192 aa).

An S4 RNA-binding domain is found at 83 to 145 (RRLDNLVYRL…SRKIQTYASN (63 aa)).

Belongs to the universal ribosomal protein uS4 family. As to quaternary structure, part of the 30S ribosomal subunit. Contacts protein S5. The interaction surface between S4 and S5 is involved in control of translational fidelity.

Its function is as follows. One of the primary rRNA binding proteins, it binds directly to 16S rRNA where it nucleates assembly of the body of the 30S subunit. Functionally, with S5 and S12 plays an important role in translational accuracy. The protein is Small ribosomal subunit protein uS4B (rpsD2) of Clostridium acetobutylicum (strain ATCC 824 / DSM 792 / JCM 1419 / IAM 19013 / LMG 5710 / NBRC 13948 / NRRL B-527 / VKM B-1787 / 2291 / W).